A 416-amino-acid chain; its full sequence is Maltoporin (416 aa).

The first 26 residues, 1–26, serve as a signal peptide directing secretion; it reads MELTMKKVSVIAAAVAATLAAGSAFA.

It belongs to the porin LamB (TC 1.B.3) family. As to quaternary structure, homotrimer formed of three 18-stranded antiparallel beta-barrels, containing three independent channels.

It is found in the cell outer membrane. It catalyses the reaction beta-maltose(in) = beta-maltose(out). Its function is as follows. Involved in the transport of maltose and maltodextrins. The sequence is that of Maltoporin from Vibrio cholerae serotype O1 (strain ATCC 39541 / Classical Ogawa 395 / O395).